The sequence spans 289 residues: Pseudouridine-5'-phosphate glycosidase (289 aa).

The Proton donor role is filled by E10. 2 residues coordinate substrate: K71 and V91. Position 121 (D121) interacts with Mn(2+). Substrate is bound at residue 123–125 (SQD). K142 serves as the catalytic Nucleophile.

Belongs to the pseudouridine-5'-phosphate glycosidase family. Homotrimer. The cofactor is Mn(2+).

It carries out the reaction D-ribose 5-phosphate + uracil = psi-UMP + H2O. Its function is as follows. Catalyzes the reversible cleavage of pseudouridine 5'-phosphate (PsiMP) to ribose 5-phosphate and uracil. Functions biologically in the cleavage direction, as part of a pseudouridine degradation pathway. This Kosmotoga olearia (strain ATCC BAA-1733 / DSM 21960 / TBF 19.5.1) protein is Pseudouridine-5'-phosphate glycosidase.